A 224-amino-acid chain; its full sequence is Cutinase 1 (224 aa).

Positions 1–16 are cleaved as a signal peptide; it reads MKFLSVLSLAITLAAA. Cysteine 46 and cysteine 125 are joined by a disulfide. The active-site Nucleophile is serine 136. Residues cysteine 187 and cysteine 194 are joined by a disulfide bond. Aspartate 191 is an active-site residue. Residue histidine 204 is the Proton donor/acceptor of the active site.

The protein belongs to the cutinase family. The 2 disulfide bonds play a critical role in holding the catalytic residues in juxta-position; reduction of the disulfide bridges results in the complete inactivation of the enzyme. Post-translationally, the N-terminus is blocked.

Its subcellular location is the secreted. The enzyme catalyses cutin + H2O = cutin monomers.. Inhibited by diisopropyl fluorophosphate (DFP). Functionally, catalyzes the hydrolysis of complex carboxylic polyesters found in the cell wall of plants. Degrades cutin, a macromolecule that forms the structure of the plant cuticle. Allows pathogenic fungi to penetrate through the cuticular barrier into the host plant during the initial stage of fungal infection. This is Cutinase 1 (CUTA) from Colletotrichum gloeosporioides (Anthracnose fungus).